Reading from the N-terminus, the 98-residue chain is NADH-ubiquinone oxidoreductase chain 4L (98 aa).

3 helical membrane-spanning segments follow: residues 2-22, 29-49, and 61-81; these read PSIF…TLVF, SLLC…LIIL, and ILLL…LVMV.

This sequence belongs to the complex I subunit 4L family. Core subunit of respiratory chain NADH dehydrogenase (Complex I) which is composed of 45 different subunits.

The protein resides in the mitochondrion inner membrane. It carries out the reaction a ubiquinone + NADH + 5 H(+)(in) = a ubiquinol + NAD(+) + 4 H(+)(out). In terms of biological role, core subunit of the mitochondrial membrane respiratory chain NADH dehydrogenase (Complex I) which catalyzes electron transfer from NADH through the respiratory chain, using ubiquinone as an electron acceptor. Part of the enzyme membrane arm which is embedded in the lipid bilayer and involved in proton translocation. This is NADH-ubiquinone oxidoreductase chain 4L (MT-ND4L) from Avahi laniger (Eastern woolly lemur).